Consider the following 118-residue polypeptide: Holo-[acyl-carrier-protein] synthase (118 aa).

Residues aspartate 5 and glutamate 50 each coordinate Mg(2+).

Belongs to the P-Pant transferase superfamily. AcpS family. Mg(2+) is required as a cofactor.

It is found in the cytoplasm. The enzyme catalyses apo-[ACP] + CoA = holo-[ACP] + adenosine 3',5'-bisphosphate + H(+). Transfers the 4'-phosphopantetheine moiety from coenzyme A to a Ser of acyl-carrier-protein. This Aliarcobacter butzleri (strain RM4018) (Arcobacter butzleri) protein is Holo-[acyl-carrier-protein] synthase.